The chain runs to 127 residues: Holo-[acyl-carrier-protein] synthase (127 aa).

Mg(2+)-binding residues include aspartate 9 and glutamate 58.

Belongs to the P-Pant transferase superfamily. AcpS family. Mg(2+) is required as a cofactor.

It is found in the cytoplasm. It carries out the reaction apo-[ACP] + CoA = holo-[ACP] + adenosine 3',5'-bisphosphate + H(+). Its function is as follows. Transfers the 4'-phosphopantetheine moiety from coenzyme A to a Ser of acyl-carrier-protein. The sequence is that of Holo-[acyl-carrier-protein] synthase from Shewanella baltica (strain OS195).